The primary structure comprises 333 residues: MPPTVNMGIPGAASSVVERTAGKRVLLAEPRGYCAGVDRAVETVERALEKHGAPIYVRHEIVHNRYVVDTLAKAGAIFVEQTDEVPEGAIVVFSAHGVAPTVHVEAAARNLKTIDATCPLVTKVHNEAKRFARDDYDILLVGHEGHEEVVGTAGEAPDHVQVVDNPDAVDNVVVRDPNKVIWLSQTTLSVDETMETVRRLREKFPTLQDPPSDDICYATQNRQVAVKAMAPECELVIVVGSKNSSNSVRLVEVALGAGSRAAHLVDYAEDIDPAWLDGVTTVGVTSGASVPEILVRGVLDRLAEHGFDTVQPVTTANETLVFALPREIRPARA.

A [4Fe-4S] cluster-binding site is contributed by cysteine 34. Residues histidine 63 and histidine 96 each coordinate (2E)-4-hydroxy-3-methylbut-2-enyl diphosphate. Dimethylallyl diphosphate contacts are provided by histidine 63 and histidine 96. The isopentenyl diphosphate site is built by histidine 63 and histidine 96. Cysteine 118 contributes to the [4Fe-4S] cluster binding site. Histidine 146 lines the (2E)-4-hydroxy-3-methylbut-2-enyl diphosphate pocket. A dimethylallyl diphosphate-binding site is contributed by histidine 146. Histidine 146 lines the isopentenyl diphosphate pocket. Residue glutamate 148 is the Proton donor of the active site. Threonine 186 is a binding site for (2E)-4-hydroxy-3-methylbut-2-enyl diphosphate. Cysteine 216 contacts [4Fe-4S] cluster. Residues serine 244, serine 245, asparagine 246, and serine 289 each coordinate (2E)-4-hydroxy-3-methylbut-2-enyl diphosphate. Serine 244, serine 245, asparagine 246, and serine 289 together coordinate dimethylallyl diphosphate. Isopentenyl diphosphate contacts are provided by serine 244, serine 245, asparagine 246, and serine 289.

It belongs to the IspH family. It depends on [4Fe-4S] cluster as a cofactor.

The enzyme catalyses isopentenyl diphosphate + 2 oxidized [2Fe-2S]-[ferredoxin] + H2O = (2E)-4-hydroxy-3-methylbut-2-enyl diphosphate + 2 reduced [2Fe-2S]-[ferredoxin] + 2 H(+). The catalysed reaction is dimethylallyl diphosphate + 2 oxidized [2Fe-2S]-[ferredoxin] + H2O = (2E)-4-hydroxy-3-methylbut-2-enyl diphosphate + 2 reduced [2Fe-2S]-[ferredoxin] + 2 H(+). It participates in isoprenoid biosynthesis; dimethylallyl diphosphate biosynthesis; dimethylallyl diphosphate from (2E)-4-hydroxy-3-methylbutenyl diphosphate: step 1/1. The protein operates within isoprenoid biosynthesis; isopentenyl diphosphate biosynthesis via DXP pathway; isopentenyl diphosphate from 1-deoxy-D-xylulose 5-phosphate: step 6/6. In terms of biological role, catalyzes the conversion of 1-hydroxy-2-methyl-2-(E)-butenyl 4-diphosphate (HMBPP) into a mixture of isopentenyl diphosphate (IPP) and dimethylallyl diphosphate (DMAPP). Acts in the terminal step of the DOXP/MEP pathway for isoprenoid precursor biosynthesis. The polypeptide is 4-hydroxy-3-methylbut-2-enyl diphosphate reductase (Mycolicibacterium gilvum (strain PYR-GCK) (Mycobacterium gilvum (strain PYR-GCK))).